We begin with the raw amino-acid sequence, 498 residues long: ATP synthase subunit beta, chloroplastic (498 aa).

172–179 (GGAGVGKT) contacts ATP.

Belongs to the ATPase alpha/beta chains family. F-type ATPases have 2 components, CF(1) - the catalytic core - and CF(0) - the membrane proton channel. CF(1) has five subunits: alpha(3), beta(3), gamma(1), delta(1), epsilon(1). CF(0) has four main subunits: a(1), b(1), b'(1) and c(9-12).

Its subcellular location is the plastid. It is found in the chloroplast thylakoid membrane. The catalysed reaction is ATP + H2O + 4 H(+)(in) = ADP + phosphate + 5 H(+)(out). Produces ATP from ADP in the presence of a proton gradient across the membrane. The catalytic sites are hosted primarily by the beta subunits. The polypeptide is ATP synthase subunit beta, chloroplastic (Nicotiana bigelovii (Bigelov's tobacco)).